A 514-amino-acid polypeptide reads, in one-letter code: Protein translocase subunit SecD (514 aa).

5 consecutive transmembrane segments (helical) span residues 7–27 (WKIF…LPNF), 357–377 (IIGF…LGLF), 389–409 (VLAL…AGII), 448–470 (FATI…IFGV), and 482–502 (IGII…IDIW).

It belongs to the SecD/SecF family. SecD subfamily. As to quaternary structure, forms a complex with SecF. Part of the essential Sec protein translocation apparatus which comprises SecA, SecYEG and auxiliary proteins SecDF-YajC and YidC.

It localises to the cell inner membrane. In terms of biological role, part of the Sec protein translocase complex. Interacts with the SecYEG preprotein conducting channel. SecDF uses the proton motive force (PMF) to complete protein translocation after the ATP-dependent function of SecA. The polypeptide is Protein translocase subunit SecD (Rickettsia bellii (strain RML369-C)).